Reading from the N-terminus, the 231-residue chain is Endonuclease NucS (231 aa).

Belongs to the NucS endonuclease family.

It localises to the cytoplasm. Its function is as follows. Cleaves both 3' and 5' ssDNA extremities of branched DNA structures. This is Endonuclease NucS from Pseudarthrobacter chlorophenolicus (strain ATCC 700700 / DSM 12829 / CIP 107037 / JCM 12360 / KCTC 9906 / NCIMB 13794 / A6) (Arthrobacter chlorophenolicus).